Consider the following 457-residue polypeptide: Bifunctional protein GlmU (457 aa).

Residues Met1–Arg230 are pyrophosphorylase. Residues Leu9–Gly12, Lys23, Gln73, and Gly78–Thr79 each bind UDP-N-acetyl-alpha-D-glucosamine. Asp103 is a Mg(2+) binding site. The UDP-N-acetyl-alpha-D-glucosamine site is built by Gly140, Glu155, Asn170, and Asn228. Residue Asn228 coordinates Mg(2+). The segment at Ile231–Asn251 is linker. Positions Gly252 to Lys457 are N-acetyltransferase. Residues Arg333 and Lys351 each contribute to the UDP-N-acetyl-alpha-D-glucosamine site. His363 functions as the Proton acceptor in the catalytic mechanism. 2 residues coordinate UDP-N-acetyl-alpha-D-glucosamine: Tyr366 and Asn377. Acetyl-CoA is bound by residues Asn386–Tyr387, Ala423, and Arg440.

It in the N-terminal section; belongs to the N-acetylglucosamine-1-phosphate uridyltransferase family. In the C-terminal section; belongs to the transferase hexapeptide repeat family. As to quaternary structure, homotrimer. Mg(2+) is required as a cofactor.

It is found in the cytoplasm. The enzyme catalyses alpha-D-glucosamine 1-phosphate + acetyl-CoA = N-acetyl-alpha-D-glucosamine 1-phosphate + CoA + H(+). It carries out the reaction N-acetyl-alpha-D-glucosamine 1-phosphate + UTP + H(+) = UDP-N-acetyl-alpha-D-glucosamine + diphosphate. The protein operates within nucleotide-sugar biosynthesis; UDP-N-acetyl-alpha-D-glucosamine biosynthesis; N-acetyl-alpha-D-glucosamine 1-phosphate from alpha-D-glucosamine 6-phosphate (route II): step 2/2. Its pathway is nucleotide-sugar biosynthesis; UDP-N-acetyl-alpha-D-glucosamine biosynthesis; UDP-N-acetyl-alpha-D-glucosamine from N-acetyl-alpha-D-glucosamine 1-phosphate: step 1/1. It functions in the pathway bacterial outer membrane biogenesis; LPS lipid A biosynthesis. Catalyzes the last two sequential reactions in the de novo biosynthetic pathway for UDP-N-acetylglucosamine (UDP-GlcNAc). The C-terminal domain catalyzes the transfer of acetyl group from acetyl coenzyme A to glucosamine-1-phosphate (GlcN-1-P) to produce N-acetylglucosamine-1-phosphate (GlcNAc-1-P), which is converted into UDP-GlcNAc by the transfer of uridine 5-monophosphate (from uridine 5-triphosphate), a reaction catalyzed by the N-terminal domain. The chain is Bifunctional protein GlmU from Listeria monocytogenes serotype 4a (strain HCC23).